A 275-amino-acid polypeptide reads, in one-letter code: Autophagy protein 5 (275 aa).

Position 1 is an N-acetylmethionine (M1). Residue K130 forms a Glycyl lysine isopeptide (Lys-Gly) (interchain with G-Cter in ATG12) linkage.

It belongs to the ATG5 family. As to quaternary structure, forms a conjugate with ATG12. Part of the minor complex composed of 4 sets of ATG12-ATG5 and ATG16L1 (400 kDa); this complex interacts with ATG3 leading to disruption of ATG7 interaction and promotion of ATG8-like proteins lipidation. Forms an 800-kDa complex composed of ATG12-ATG5 and ATG16L2. The ATG12-ATG5 conjugate interacts with RAB33A; this interaction is bridged by ATG16L1 and promotes ATG12-ATG5-ATG16L1 complex recruitment to phagophores. Interacts with TECPR1; the interaction is direct and does not take place when ATG16L1 is associated with the ATG5-ATG12 conjugate. Interacts with DHX58/RIG-1, IFIH1/MDA5 and MAVS/IPS-1 in monomeric form as well as in ATG12-ATG5 conjugate form. The interaction with MAVS is further enhanced upon vesicular stomatitis virus (VSV) infection. Interacts with ATG3. Interacts with ATG7 and ATG10. Interacts with FADD. Interacts with Bassoon/BSN; this interaction is important for the regulation of presynaptic autophagy. Interacts with ATG16L2. Conjugated to ATG12; which is essential for autophagy, but is not required for association with isolation membrane. In terms of processing, acetylated by EP300.

The protein resides in the cytoplasm. The protein localises to the preautophagosomal structure membrane. Its function is as follows. Involved in autophagic vesicle formation. Conjugation with ATG12, through a ubiquitin-like conjugating system involving ATG7 as an E1-like activating enzyme and ATG10 as an E2-like conjugating enzyme, is essential for its function. The ATG12-ATG5 conjugate acts as an E3-like enzyme which is required for lipidation of ATG8 family proteins and their association to the vesicle membranes. Involved in mitochondrial quality control after oxidative damage, and in subsequent cellular longevity. Plays a critical role in multiple aspects of lymphocyte development and is essential for both B and T lymphocyte survival and proliferation. Required for optimal processing and presentation of antigens for MHC II. Involved in the maintenance of axon morphology and membrane structures, as well as in normal adipocyte differentiation. Promotes primary ciliogenesis through removal of OFD1 from centriolar satellites and degradation of IFT20 via the autophagic pathway. As part of the ATG8 conjugation system with ATG12 and ATG16L1, required for recruitment of LRRK2 to stressed lysosomes and induction of LRRK2 kinase activity in response to lysosomal stress. In terms of biological role, may play an important role in the apoptotic process, possibly within the modified cytoskeleton. Its expression is a relatively late event in the apoptotic process, occurring downstream of caspase activity. Plays a crucial role in IFN-gamma-induced autophagic cell death by interacting with FADD. This chain is Autophagy protein 5, found in Sus scrofa (Pig).